Here is a 651-residue protein sequence, read N- to C-terminus: Macrolide export ATP-binding/permease protein MacB (651 aa).

An ABC transporter domain is found at 2-239 (IEIVNVTKTY…PQMPQGGMEA (238 aa)). 38 to 45 (GASGSGKS) contributes to the ATP binding site. The next 4 helical transmembrane spans lie at 269 to 289 (FLSV…MALG), 532 to 552 (IAAI…LVSV), 589 to 609 (IIGI…AGWA), and 614 to 634 (MFSV…FGLW).

Belongs to the ABC transporter superfamily. Macrolide exporter (TC 3.A.1.122) family. In terms of assembly, homodimer.

Its subcellular location is the cell inner membrane. Functionally, non-canonical ABC transporter that contains transmembrane domains (TMD), which form a pore in the inner membrane, and an ATP-binding domain (NBD), which is responsible for energy generation. Confers resistance against macrolides. In Chlorobaculum tepidum (strain ATCC 49652 / DSM 12025 / NBRC 103806 / TLS) (Chlorobium tepidum), this protein is Macrolide export ATP-binding/permease protein MacB.